We begin with the raw amino-acid sequence, 400 residues long: 11-beta-hydroxysteroid dehydrogenase type 2 (400 aa).

82–111 contacts NAD(+); it reads TRAVLITGCDTGFGKETAKKLDAMGFTVLA. S219 is a substrate binding site. Y232 (proton acceptor) is an active-site residue. The tract at residues 378 to 400 is disordered; that stretch reads PGQPGPVHDTTQDPNPSPTVSAL. Residues 389 to 400 show a composition bias toward polar residues; that stretch reads QDPNPSPTVSAL.

The protein belongs to the short-chain dehydrogenases/reductases (SDR) family. In terms of assembly, interacts with ligand-free cytoplasmic NR3C2. In terms of tissue distribution, highly expressed in kidney, adrenal gland and distal colon, and at much lower levels in lung, hypothalamus, hippocampus, and midbrain.

It is found in the microsome. It localises to the endoplasmic reticulum. The catalysed reaction is an 11beta-hydroxysteroid + NAD(+) = an 11-oxosteroid + NADH + H(+). It catalyses the reaction corticosterone + NAD(+) = 11-dehydrocorticosterone + NADH + H(+). The enzyme catalyses 11beta,17beta-dihydroxyandrost-4-ene-3-one + NAD(+) = 17beta-hydroxyandrost-4-ene-3,11-dione + NADH + H(+). It carries out the reaction 11beta-hydroxyandrost-4-ene-3,17-dione + NAD(+) = androst-4-ene-3,11,17-trione + NADH + H(+). The protein operates within steroid metabolism. Inhibited by glycyrrhetinic acid. Induced by progesterone, through the Ihh signaling pathway. Its function is as follows. Catalyzes the conversion of biologically active 11beta-hydroxyglucocorticoids (11beta-hydroxysteroid) such as corticosterone, to inactive 11-ketoglucocorticoids (11-oxosteroid) such as 11-dehydrocorticosterone, in the presence of NAD(+). Functions as a dehydrogenase (oxidase), thereby decreasing the concentration of active glucocorticoids, thus protecting the nonselective mineralocorticoid receptor from occupation by glucocorticoids. Plays an important role in maintaining glucocorticoids balance during preimplantation and protects the fetus from excessive maternal corticosterone exposure. Catalyzes the oxidation of 11beta-hydroxytestosterone (11beta,17beta-dihydroxyandrost-4-ene-3-one) to 11-ketotestosterone (17beta-hydroxyandrost-4-ene-3,11-dione), a major bioactive androgen. Catalyzes the conversion of 11beta-hydroxyandrostenedione (11beta-hydroxyandrost-4-ene-3,17-dione) to 11-ketoandrostenedione (androst-4-ene-3,11,17-trione), which can be further metabolized to 11-ketotestosterone. Converts 7-beta-25-dihydroxycholesterol to 7-oxo-25-hydroxycholesterol in vitro. 7-beta-25-dihydroxycholesterol (not 7-oxo-25-hydroxycholesterol) acts as a ligand for the G-protein-coupled receptor (GPCR) Epstein-Barr virus-induced gene 2 (EBI2) and may thereby regulate immune cell migration. This is 11-beta-hydroxysteroid dehydrogenase type 2 (Hsd11b2) from Rattus norvegicus (Rat).